The following is a 111-amino-acid chain: Nucleoid-associated protein PSEEN1789 (111 aa).

Disordered stretches follow at residues 1-25 and 89-111; these read MMKG…KMQE and NSQD…KMPF.

The protein belongs to the YbaB/EbfC family. As to quaternary structure, homodimer.

It is found in the cytoplasm. The protein localises to the nucleoid. In terms of biological role, binds to DNA and alters its conformation. May be involved in regulation of gene expression, nucleoid organization and DNA protection. The chain is Nucleoid-associated protein PSEEN1789 from Pseudomonas entomophila (strain L48).